A 3411-amino-acid chain; its full sequence is Genome polyprotein (3411 aa).

Residues 1 to 104 are Cytoplasmic-facing; sequence MSGRKAQGKT…LSSRKRRSHD (104 aa). Residues 38-72 are hydrophobic; homodimerization of capsid protein C; that stretch reads PGPSRGVQGFIFFFLFNILTGKKITAHLKRLWKML. Residues 102–121 constitute a propeptide, ER anchor for the capsid protein C, removed in mature form by serine protease NS3; sequence SHDVLTVQFLILGMLLMTGG. A helical membrane pass occupies residues 105-125; sequence VLTVQFLILGMLLMTGGVTLV. At 126-244 the chain is on the extracellular side; the sequence is RKNRWLLLNV…GERQLQKIER (119 aa). N-linked (GlcNAc...) asparagine; by host glycans are attached at residues Asn-134 and Asn-150. Residues 245–265 traverse the membrane as a helical segment; the sequence is WLVRNPFFAVTALTIAYLVGS. The Cytoplasmic portion of the chain corresponds to 266 to 270; sequence NMTQR. The chain crosses the membrane as a helical span at residues 271-285; sequence VVIALLVLAVGPAYS. Residues 286 to 730 lie on the Extracellular side of the membrane; the sequence is AHCIGITDRD…TVFGSAFQGL (445 aa). 8 cysteine pairs are disulfide-bonded: Cys-288–Cys-315, Cys-345–Cys-401, Cys-345–Cys-406, Cys-359–Cys-390, Cys-377–Cys-401, Cys-377–Cys-406, Cys-467–Cys-568, and Cys-585–Cys-615. The fusion peptide stretch occupies residues 383-396; the sequence is DRGWGNGCGLFGKG. Residues 731–751 traverse the membrane as a helical segment; that stretch reads FGGLNWITKVIMGAVLIWVGI. The Extracellular segment spans residues 752–757; the sequence is NTRNMT. A helical membrane pass occupies residues 758 to 778; sequence MSMSMILVGVIMMFLSLGVGA. The Extracellular segment spans residues 779 to 1132; that stretch reads DQGCAINFGK…LVRSWVTAGE (354 aa). Intrachain disulfides connect Cys-782–Cys-793, Cys-833–Cys-921, Cys-957–Cys-1002, Cys-1058–Cys-1107, Cys-1069–Cys-1091, and Cys-1090–Cys-1094. Asn-908 and Asn-986 each carry an N-linked (GlcNAc...) asparagine; by host glycan. Residues 1133-1153 traverse the membrane as a helical segment; that stretch reads IHAVPFGLVSMMIAMEVVLRK. Topologically, residues 1154-1201 are cytoplasmic; that stretch reads RQGPKQMLVGGVVLLGAMLVGQVTLLDLLKLTVAVGLHFHEMNNGGDA. The chain crosses the membrane as a helical span at residues 1202-1222; that stretch reads MYMALIAAFSIRPGLLIGFGL. At 1223 to 1287 the chain is on the lumenal side; sequence RTLWSPRERL…ILPLMALLTP (65 aa). A helical transmembrane segment spans residues 1288-1308; the sequence is VTMAEVRLATMLFCTVVIIGV. Residues 1309–1355 lie on the Cytoplasmic side of the membrane; sequence LHQNSKDTSMQKTIPLVALTLTSYLGLTQPFLGLCAFLATRIFGRRS. Residues 1356-1376 traverse the membrane as a helical segment; the sequence is IPVNEALAAAGLVGVLAGLAF. Residues 1377-1378 are Lumenal-facing; it reads QE. A helical transmembrane segment spans residues 1379–1399; that stretch reads MENFLGPIAVGGILMMLVSVA. Residues 1400–1456 are Cytoplasmic-facing; that stretch reads GRVDGLELKKLGEVSWEEEAEISGSSARYDVALSEQGEFKLLSEEKVPWDQVVMTSL. The tract at residues 1407–1446 is interacts with and activates NS3 protease; that stretch reads LKKLGEVSWEEEAEISGSSARYDVALSEQGEFKLLSEEKV. Residues 1457-1477 constitute an intramembrane region (helical); the sequence is ALVGAAIHPFALLLVLAGWLF. Topologically, residues 1478-2157 are cytoplasmic; the sequence is HVRGARRSGD…RNALSMMPEA (680 aa). The Peptidase S7 domain maps to 1485 to 1665; sequence SGDVLWDIPT…EVKEEGKEEL (181 aa). Active-site charge relay system; for serine protease NS3 activity residues include His-1537, Asp-1561, and Ser-1622. Residues 1669–1825 enclose the Helicase ATP-binding domain; sequence PTMLKKGMTT…HSNGEIEDVQ (157 aa). The important for RNA-binding stretch occupies residues 1673-1676; the sequence is KKGM. 1682-1689 is a binding site for ATP; the sequence is FHPGAGKT. The DEAH box motif lies at 1773-1776; it reads DEAH. One can recognise a Helicase C-terminal domain in the interval 1820–1997; the sequence is EIEDVQTDIP…VRGGMVAPLY (178 aa). An N6-acetyllysine; by host modification is found at Lys-1877. The segment at 1942–1961 is disordered; that stretch reads AAQRRGRIGRNPNRDGDSYY. Residues 2158-2178 traverse the membrane as a helical segment; that stretch reads MTIVMLFILAGLLTSGMVIFF. At 2179-2186 the chain is on the lumenal side; that stretch reads MSPKGISR. Positions 2187–2207 form an intramembrane region, helical; that stretch reads MSMAMGTMAGCGYLMFLGGVK. Residues 2208-2209 lie on the Lumenal side of the membrane; the sequence is PT. The chain crosses the membrane as a helical span at residues 2210–2230; sequence HISYIMLIFFVLMVVVIPEPG. At 2231–2241 the chain is on the cytoplasmic side; it reads QQRSIQDNQVA. A helical membrane pass occupies residues 2242–2262; sequence YLIIGILTLVSVVAANELGML. Residues 2263 to 2293 are Lumenal-facing; it reads EKTKEDLFGKKNLIPSSASPWSWPDLDLKPG. Residues 2294-2314 constitute an intramembrane region (helical); the sequence is AAWTVYVGIVTMLSPMLHHWI. The Lumenal portion of the chain corresponds to 2315-2360; sequence KVEYGNLSLSGIAQSASVLSFMDKGIPFMKMNISVIILLVSGWNSI. A helical membrane pass occupies residues 2361-2380; the sequence is TVMPLLCGIGCAMLHWSLIL. Over 2381 to 2421 the chain is Cytoplasmic; the sequence is PGIKAQQSKLAQRRVFHGVAKNPVVDGNPTVDIEEAPEMPA. The helical transmembrane segment at 2422–2442 threads the bilayer; that stretch reads LYEKKLALYLLLALSLASVAM. Residues 2443–2445 are Lumenal-facing; the sequence is CRT. A helical transmembrane segment spans residues 2446 to 2466; the sequence is PFSLAEGIVLASAALGPLIEG. The Cytoplasmic portion of the chain corresponds to 2467–3411; the sequence is NTSLLWNGPM…DADLQPGELI (945 aa). The 265-residue stretch at 2507–2771 folds into the mRNA cap 0-1 NS5-type MT domain; sequence GSANGKTLGE…DVILPIGTRS (265 aa). Ser-2562 provides a ligand contact to S-adenosyl-L-methionine. Ser-2562 carries the post-translational modification Phosphoserine. Lys-2567 acts as the For 2'-O-MTase activity in catalysis. Gly-2592, Trp-2593, Thr-2610, Leu-2611, Asp-2637, and Ile-2638 together coordinate S-adenosyl-L-methionine. The active-site For 2'-O-MTase activity is the Asp-2652. Ile-2653 provides a ligand contact to S-adenosyl-L-methionine. Residues Lys-2688 and Glu-2724 each act as for 2'-O-MTase activity in the active site. Tyr-2726 contacts S-adenosyl-L-methionine. The short motif at 2878–2911 is the Nuclear localization signal element; that stretch reads RKIMKVVNRWLFRHLAREKNPRLCTKEEFIAKVR. Residues Glu-2945, His-2949, Cys-2954, and Cys-2957 each coordinate Zn(2+). A RdRp catalytic domain is found at 3035 to 3187; sequence GGFYADDTAG…RPIDDRFGLA (153 aa). Residues His-3222, Cys-3238, and Cys-3357 each contribute to the Zn(2+) site.

This sequence in the N-terminal section; belongs to the class I-like SAM-binding methyltransferase superfamily. mRNA cap 0-1 NS5-type methyltransferase family. As to quaternary structure, homodimer. Interacts (via N-terminus) with host EXOC1 (via C-terminus); this interaction results in EXOC1 degradation through the proteasome degradation pathway. In terms of assembly, forms heterodimers with envelope protein E in the endoplasmic reticulum and Golgi. Homodimer; in the endoplasmic reticulum and Golgi. Interacts with protein prM. Interacts with non-structural protein 1. As to quaternary structure, homodimer; Homohexamer when secreted. Interacts with envelope protein E. NS1 interacts with NS4B. Interacts with host complement protein CFH; this interaction leads to the degradation of C3. In terms of assembly, interacts (via N-terminus) with serine protease NS3. Forms a heterodimer with serine protease NS3. May form homooligomers. As to quaternary structure, forms a heterodimer with NS2B. Interacts with non-structural protein 2A (via N-terminus). Interacts with NS4B. Interacts with unphosphorylated RNA-directed RNA polymerase NS5; this interaction stimulates RNA-directed RNA polymerase NS5 guanylyltransferase activity. NS3 interacts with host PDCD6IP; this interaction contributes to virion release. In terms of assembly, interacts with serine protease NS3. Homodimer. Interacts with host STAT2; this interaction prevents the establishment of cellular antiviral state. Interacts with serine protease NS3. Interacts with host TRIM23; this interaction leads to NS5 ubiquitination. In terms of processing, specific enzymatic cleavages in vivo yield mature proteins. The nascent capsid protein C contains a C-terminal hydrophobic domain that act as a signal sequence for translocation of prM into the lumen of the ER. Mature capsid protein C is cleaved at a site upstream of this hydrophobic domain by NS3. prM is cleaved in post-Golgi vesicles by a host furin, releasing the mature small envelope protein M, and peptide pr. Non-structural protein 2A-alpha, a C-terminally truncated form of non-structural protein 2A, results from partial cleavage by NS3. Specific enzymatic cleavages in vivo yield mature proteins peptide 2K acts as a signal sequence and is removed from the N-terminus of NS4B by the host signal peptidase in the ER lumen. Signal cleavage at the 2K-4B site requires a prior NS3 protease-mediated cleavage at the 4A-2K site. Cleaved in post-Golgi vesicles by a host furin, releasing the mature small envelope protein M, and peptide pr. This cleavage is incomplete as up to 30% of viral particles still carry uncleaved prM. Post-translationally, N-glycosylated. In terms of processing, N-glycosylated. The excreted form is glycosylated and this is required for efficient secretion of the protein from infected cells. Polyubiquitinated; ubiquitination is probably mediated by host TRIM23 and is prerequisite for NS5-STAT2 interaction. NS5 is not ISGylated or sumoylated. Post-translationally, acetylated by host KAT5. Acetylation modulates NS3 RNA-binding and unwinding activities and plays an important positive role for viral replication. In terms of processing, phosphorylated on serines residues. This phosphorylation may trigger NS5 nuclear localization.

It localises to the virion. It is found in the host nucleus. The protein localises to the host cytoplasm. Its subcellular location is the host perinuclear region. The protein resides in the secreted. It localises to the virion membrane. It is found in the host endoplasmic reticulum membrane. It carries out the reaction Selective hydrolysis of -Xaa-Xaa-|-Yaa- bonds in which each of the Xaa can be either Arg or Lys and Yaa can be either Ser or Ala.. It catalyses the reaction RNA(n) + a ribonucleoside 5'-triphosphate = RNA(n+1) + diphosphate. The catalysed reaction is a ribonucleoside 5'-triphosphate + H2O = a ribonucleoside 5'-diphosphate + phosphate + H(+). The enzyme catalyses ATP + H2O = ADP + phosphate + H(+). It carries out the reaction a 5'-end (5'-triphosphoguanosine)-ribonucleoside in mRNA + S-adenosyl-L-methionine = a 5'-end (N(7)-methyl 5'-triphosphoguanosine)-ribonucleoside in mRNA + S-adenosyl-L-homocysteine. It catalyses the reaction a 5'-end (N(7)-methyl 5'-triphosphoguanosine)-ribonucleoside in mRNA + S-adenosyl-L-methionine = a 5'-end (N(7)-methyl 5'-triphosphoguanosine)-(2'-O-methyl-ribonucleoside) in mRNA + S-adenosyl-L-homocysteine + H(+). Plays a role in virus budding by binding to the cell membrane and gathering the viral RNA into a nucleocapsid that forms the core of a mature virus particle. During virus entry, may induce genome penetration into the host cytoplasm after hemifusion induced by the surface proteins. Can migrate to the cell nucleus where it modulates host functions. In terms of biological role, inhibits RNA silencing by interfering with host Dicer. Its function is as follows. Prevents premature fusion activity of envelope proteins in trans-Golgi by binding to envelope protein E at pH6.0. After virion release in extracellular space, gets dissociated from E dimers. Functionally, acts as a chaperone for envelope protein E during intracellular virion assembly by masking and inactivating envelope protein E fusion peptide. prM is the only viral peptide matured by host furin in the trans-Golgi network probably to avoid catastrophic activation of the viral fusion activity in acidic Golgi compartment prior to virion release. prM-E cleavage is inefficient, and many virions are only partially matured. These uncleaved prM would play a role in immune evasion. May play a role in virus budding. Exerts cytotoxic effects by activating a mitochondrial apoptotic pathway through M ectodomain. May display a viroporin activity. In terms of biological role, binds to host cell surface receptor and mediates fusion between viral and cellular membranes. Envelope protein is synthesized in the endoplasmic reticulum in the form of heterodimer with protein prM. They play a role in virion budding in the ER, and the newly formed immature particle is covered with 60 spikes composed of heterodimer between precursor prM and envelope protein E. The virion is transported to the Golgi apparatus where the low pH causes dissociation of PrM-E heterodimers and formation of E homodimers. prM-E cleavage is inefficient, and many virions are only partially matured. These uncleaved prM would play a role in immune evasion. Its function is as follows. Involved in immune evasion, pathogenesis and viral replication. Once cleaved off the polyprotein, is targeted to three destinations: the viral replication cycle, the plasma membrane and the extracellular compartment. Essential for viral replication. Required for formation of the replication complex and recruitment of other non-structural proteins to the ER-derived membrane structures. Excreted as a hexameric lipoparticle that plays a role against host immune response. Antagonizing the complement function. Binds to the host macrophages and dendritic cells. Inhibits signal transduction originating from Toll-like receptor 3 (TLR3). Functionally, component of the viral RNA replication complex that functions in virion assembly and antagonizes the host immune response. Required cofactor for the serine protease function of NS3. May have membrane-destabilizing activity and form viroporins. In terms of biological role, displays three enzymatic activities: serine protease, NTPase and RNA helicase. NS3 serine protease, in association with NS2B, performs its autocleavage and cleaves the polyprotein at dibasic sites in the cytoplasm: C-prM, NS2A-NS2B, NS2B-NS3, NS3-NS4A, NS4A-2K and NS4B-NS5. NS3 RNA helicase binds RNA and unwinds dsRNA in the 3' to 5' direction. Also plays a role in virus assembly. Its function is as follows. Regulates the ATPase activity of the NS3 helicase activity. NS4A allows NS3 helicase to conserve energy during unwinding. Functionally, functions as a signal peptide for NS4B and is required for the interferon antagonism activity of the latter. Induces the formation of ER-derived membrane vesicles where the viral replication takes place. Inhibits interferon (IFN)-induced host STAT1 phosphorylation and nuclear translocation, thereby preventing the establishment of cellular antiviral state by blocking the IFN-alpha/beta pathway. In terms of biological role, replicates the viral (+) and (-) RNA genome, and performs the capping of genomes in the cytoplasm. NS5 methylates viral RNA cap at guanine N-7 and ribose 2'-O positions. Besides its role in RNA genome replication, also prevents the establishment of cellular antiviral state by blocking the interferon-alpha/beta (IFN-alpha/beta) signaling pathway. IFN-I induces binding of NS5 to host IFN-activated transcription factor STAT2, preventing its transcriptional activity. Host TRIM23 is the E3 ligase that interacts with and polyubiquitinates NS5 to promote its binding to STAT2 and trigger IFN-I signaling inhibition. The polypeptide is Genome polyprotein (Yellow fever virus (strain Ghana/Asibi/1927) (YFV)).